Here is a 369-residue protein sequence, read N- to C-terminus: Histidine decarboxylase (369 aa).

H119 contacts substrate. N6-(pyridoxal phosphate)lysine is present on K230.

Belongs to the group II decarboxylase family. Homotetramer. It depends on pyridoxal 5'-phosphate as a cofactor.

It carries out the reaction L-histidine + H(+) = histamine + CO2. The protein is Histidine decarboxylase of Mesorhizobium japonicum (strain LMG 29417 / CECT 9101 / MAFF 303099) (Mesorhizobium loti (strain MAFF 303099)).